The following is a 466-amino-acid chain: Ribosomal protein uS12 methylthiotransferase RimO (466 aa).

Residues 31-141 (PTIGMVSLGC…VLDAVHGAVP (111 aa)) form the MTTase N-terminal domain. 6 residues coordinate [4Fe-4S] cluster: C40, C76, C105, C172, C176, and C179. The 240-residue stretch at 158 to 397 (LTPRHYSYLK…MAKAQAISEA (240 aa)) folds into the Radical SAM core domain. Residues 400-466 (AARVGQVIEV…GEYDLWGRLR (67 aa)) form the TRAM domain.

It belongs to the methylthiotransferase family. RimO subfamily. It depends on [4Fe-4S] cluster as a cofactor.

It is found in the cytoplasm. It catalyses the reaction L-aspartate(89)-[ribosomal protein uS12]-hydrogen + (sulfur carrier)-SH + AH2 + 2 S-adenosyl-L-methionine = 3-methylsulfanyl-L-aspartate(89)-[ribosomal protein uS12]-hydrogen + (sulfur carrier)-H + 5'-deoxyadenosine + L-methionine + A + S-adenosyl-L-homocysteine + 2 H(+). Functionally, catalyzes the methylthiolation of an aspartic acid residue of ribosomal protein uS12. This is Ribosomal protein uS12 methylthiotransferase RimO from Ruegeria pomeroyi (strain ATCC 700808 / DSM 15171 / DSS-3) (Silicibacter pomeroyi).